The chain runs to 444 residues: Platelet-activating factor acetylhydrolase (444 aa).

The signal sequence occupies residues 1-21 (MLPPKLHALFCLCSCLTLVHP). N-linked (GlcNAc...) asparagine glycosylation is found at N60 and N200. The Nucleophile role is filled by S274. Residues D297 and H352 each act as charge relay system in the active site. Residue N424 is glycosylated (N-linked (GlcNAc...) asparagine).

This sequence belongs to the AB hydrolase superfamily. Lipase family. N-glycosylated. As to expression, plasma.

Its subcellular location is the secreted. The protein localises to the extracellular space. It catalyses the reaction a 1-O-alkyl-2-acetyl-sn-glycero-3-phosphocholine + H2O = a 1-O-alkyl-sn-glycero-3-phosphocholine + acetate + H(+). It carries out the reaction 1-O-decyl-2-acetyl-sn-glycero-3-phosphocholine + H2O = 1-O-decyl-sn-glycero-3-phosphocholine + acetate + H(+). The catalysed reaction is 1-O-dodecyl-2-acetyl-sn-glycero-3-phosphocholine + H2O = 1-O-dodecyl-sn-glycero-3-phosphocholine + acetate + H(+). The enzyme catalyses 1-O-tetradecyl-2-acetyl-sn-glycero-3-phosphocholine + H2O = 1-O-tetradecyl-sn-glycero-3-phosphocholine + acetate + H(+). It catalyses the reaction 1-O-hexadecyl-2-acetyl-sn-glycero-3-phosphocholine + H2O = 1-O-hexadecyl-sn-glycero-3-phosphocholine + acetate + H(+). It carries out the reaction 1-O-octadecyl-2-acetyl-sn-glycero-3-phosphocholine + H2O = 1-O-octadecyl-sn-glycero-3-phosphocholine + acetate + H(+). The catalysed reaction is 1-hexadecanoyl-2-acetyl-sn-glycero-3-phosphocholine + H2O = 1-hexadecanoyl-sn-glycero-3-phosphocholine + acetate + H(+). The enzyme catalyses 1-hexadecanoyl-2-propionyl-sn-glycero-3-phosphocholine + H2O = propanoate + 1-hexadecanoyl-sn-glycero-3-phosphocholine + H(+). It catalyses the reaction 1-hexadecanoyl-2-butanoyl-sn-glycero-3-phosphocholine + H2O = butanoate + 1-hexadecanoyl-sn-glycero-3-phosphocholine + H(+). It carries out the reaction 1-hexadecanoyl-2-pentanoyl-sn-glycero-3-phosphocholine + H2O = pentanoate + 1-hexadecanoyl-sn-glycero-3-phosphocholine + H(+). The catalysed reaction is 1-hexadecanoyl-2-glutaroyl-sn-glycero-3-phosphocholine + H2O = glutarate + 1-hexadecanoyl-sn-glycero-3-phosphocholine + H(+). The enzyme catalyses 1-hexadecanoyl-2-(5-oxopentanoyl)-sn-glycero-3-phosphocholine + H2O = 5-oxopentanoate + 1-hexadecanoyl-sn-glycero-3-phosphocholine + H(+). It catalyses the reaction 1-hexadecanoyl-2-(9-oxononanoyl)-sn-glycero-3-phosphocholine + H2O = 9-oxononanoate + 1-hexadecanoyl-sn-glycero-3-phosphocholine + H(+). It carries out the reaction 1-hexadecanoyl-2-[9-hydroperoxy-(10E-octadecenoyl)]-sn-glycero-3-phosphocholine + H2O = 9-hydroperoxy-10E-octadecenoate + 1-hexadecanoyl-sn-glycero-3-phosphocholine + H(+). The catalysed reaction is 1-hexadecanoyl-2-(10-hydroperoxy-8E-octadecenoyl)-sn-glycero-3-phosphocholine + H2O = 10-hydroperoxy-(8E)-octadecenoate + 1-hexadecanoyl-sn-glycero-3-phosphocholine + H(+). Lipoprotein-associated calcium-independent phospholipase A2 involved in phospholipid catabolism during inflammatory and oxidative stress response. At the lipid-aqueous interface, hydrolyzes the ester bond of fatty acyl group attached at sn-2 position of phospholipids (phospholipase A2 activity). Specifically targets phospholipids with a short-chain fatty acyl group at sn-2 position. Can hydrolyze phospholipids with long fatty acyl chains, only if they carry oxidized functional groups. Hydrolyzes and inactivates platelet-activating factor (PAF, 1-O-alkyl-2-acetyl-sn-glycero-3-phosphocholine), a potent pro-inflammatory signaling lipid that acts through PTAFR on various innate immune cells. Hydrolyzes oxidatively truncated phospholipids carrying an aldehyde group at omega position, preventing their accumulation in low-density lipoprotein (LDL) particles and uncontrolled pro-inflammatory effects. As part of high-density lipoprotein (HDL) particles, can hydrolyze phospholipids having long-chain fatty acyl hydroperoxides at sn-2 position and protect against potential accumulation of these oxylipins in the vascular wall. Catalyzes the release from membrane phospholipids of F2-isoprostanes, lipid biomarkers of cellular oxidative damage. The polypeptide is Platelet-activating factor acetylhydrolase (PLA2G7) (Canis lupus familiaris (Dog)).